The primary structure comprises 1139 residues: Autophagy-related protein 23 (1139 aa).

Disordered regions lie at residues 1–148, 225–327, 356–388, 475–569, 648–674, 720–767, 786–828, 935–961, and 977–1012; these read MFQR…EMSP, STDK…YDDE, LTTARETSTGLVESLENATRELSKTRDVASVKD, KNEK…DTAG, KKISSSTSDAEASSKMQSEMESIKTEY, RQES…RETE, EDAQ…SKLR, AAVEERDRIEDESATLARRKTRETEDL, and HERDELEQREKEWRKRREELESVEEKAEAETDELRT. Residues 7–18 are compositionally biased toward basic and acidic residues; it reads SAIDRTIAEEQA. Residues 19 to 37 are compositionally biased toward low complexity; it reads RQQTATQSRSPSRTGSTSS. Coiled coils occupy residues 142–170 and 215–259; these read KLQEMSPEIRQKLRKLEKLEATYPELLRS and DMVM…STDQ. Composition is skewed to basic and acidic residues over residues 225–247, 261–273, 373–385, and 475–494; these read STDKDELQKKYNEAEEKAKKLEE, KTSDSETSKDAQD, ATRELSKTRDVAS, and KNEKSDSQTKITDLTKKLES. Residues 323-495 are a coiled coil; that stretch reads SYDDEIPQLQ…TDLTKKLESK (173 aa). Residues 496-522 are compositionally biased toward low complexity; that stretch reads PAPAMLTPAATPMPTVLQPAATSATAA. A compositionally biased stretch (basic residues) spans 526–537; that stretch reads GKKKNNKKKKGK. Positions 566–1067 form a coiled coil; it reads DTAGNAELKA…AAQTKLVASS (502 aa). Low complexity predominate over residues 651 to 661; it reads SSSTSDAEASS. Basic and acidic residues-rich tracts occupy residues 728–767, 786–815, 935–945, and 977–1011; these read ATKEELANKTKELRDMEKREKDLKRDVERAQKISSDRETE, EDAQRVSGRDLRRSEAEKVEISGRADKAEQ, AAVEERDRIED, and HERDELEQREKEWRKRREELESVEEKAEAETDELR. The GRIP domain maps to 1082-1132; that stretch reads SPAGAPDTVYLKTILLQFLEQKDTKLRAQLVPVLGKLLRFDKTDEQKWQKA.

Belongs to the ATG23 family. In terms of assembly, forms a complex with ATG9 and ATG27.

Its subcellular location is the cytoplasm. It is found in the preautophagosomal structure membrane. Its function is as follows. Required for cytoplasm to vacuole transport (Cvt) vesicle formation and efficient autophagy. Plays a role in ATG protein retrieval from the pre-autophagosomal structure (PAS) and is especially required for autophagy-dependent cycling of ATG9. Autophagy is required for proper vegetative growth, asexual/sexual reproduction, and full virulence. Autophagy is particularly involved in the biosynthesis of deoxynivalenol (DON), an important virulence determinant. In Gibberella zeae (strain ATCC MYA-4620 / CBS 123657 / FGSC 9075 / NRRL 31084 / PH-1) (Wheat head blight fungus), this protein is Autophagy-related protein 23.